Reading from the N-terminus, the 782-residue chain is E3 ubiquitin-protein ligase SopA (782 aa).

The disordered stretch occupies residues 137–171 (VSVSANNRPTVSEGRTPPVSPSLSLQATSSPSSPA). The segment covering 157 to 171 (PSLSLQATSSPSSPA) has biased composition (low complexity). The active-site Glycyl thioester intermediate is Cys753.

The protein belongs to the SopA E3 ligase family. In terms of processing, ubiquitinated in the presence of host E1 ubiquitin-activating enzyme, E2 ubiquitin-conjugating enzyme and ubiquitin.

It is found in the secreted. It localises to the host mitochondrion. The enzyme catalyses S-ubiquitinyl-[E2 ubiquitin-conjugating enzyme]-L-cysteine + [acceptor protein]-L-lysine = [E2 ubiquitin-conjugating enzyme]-L-cysteine + N(6)-ubiquitinyl-[acceptor protein]-L-lysine.. In terms of biological role, effector proteins function to alter host cell physiology and promote bacterial survival in host tissues. This protein is an E3 ubiquitin ligase that interferes with host's ubiquitination pathway. Required for inducing polymorphonuclear leukocytes migration across the intestinal epithelium. The chain is E3 ubiquitin-protein ligase SopA (sopA) from Salmonella dublin.